A 905-amino-acid polypeptide reads, in one-letter code: Transcriptional regulator MNL1 (905 aa).

Residues 1–29 show a composition bias toward polar residues; the sequence is MDSHNNIDQSVSELLSDPASVQQSYNSQL. 8 disordered regions span residues 1–34, 312–340, 383–419, 434–460, 525–544, 584–613, 625–671, and 685–733; these read MDSH…GPEF, QTQA…ASHT, MDQV…NARY, SEKN…NLLS, TKEE…KPKR, NISS…SESS, NVGK…GTVE, and PASE…TSST. Low complexity predominate over residues 312–334; sequence QTQAQAQAHQQQQQQSQQQHSPQ. Positions 439 to 460 are enriched in low complexity; sequence NHNNRSPPTPPTSTSSPQNLLS. Polar residues predominate over residues 584–598; the sequence is NISSHHSSGTPSITT. Residues 628–639 are compositionally biased toward basic residues; the sequence is KRKNKSYRKPKG. Low complexity-rich tracts occupy residues 647–669 and 690–710; these read QQQQ…STGT and SSLL…EASS. 2 C2H2-type zinc fingers span residues 832 to 855 and 861 to 883; these read YLCN…RSLH and YNCD…LKIH. The disordered stretch occupies residues 885–905; it reads QEDEKDCADAETGVGMDDASG.

Its subcellular location is the nucleus. Transcription factor that activates stress response genes via SLE (STRE-like) elements. Required for adaptation to weak acid stress such as acetic acid stress, but seems not involved in the response to heat, osmotic, ethanol, nutrient, oxidative, or heavy-metal stress. Activates a subset of the genes that are repressed by NRG1. The sequence is that of Transcriptional regulator MNL1 (MNL1) from Candida albicans (strain SC5314 / ATCC MYA-2876) (Yeast).